Consider the following 350-residue polypeptide: Methionine import ATP-binding protein MetN 1 (350 aa).

The 240-residue stretch at 12–251 folds into the ABC transporter domain; the sequence is IDLKNITVLF…PSREVTQDFV (240 aa). 48 to 55 is a binding site for ATP; that stretch reads GYSGAGKS.

Belongs to the ABC transporter superfamily. Methionine importer (TC 3.A.1.24) family. The complex is composed of two ATP-binding proteins (MetN), two transmembrane proteins (MetI) and a solute-binding protein (MetQ).

The protein resides in the cell membrane. It carries out the reaction L-methionine(out) + ATP + H2O = L-methionine(in) + ADP + phosphate + H(+). The enzyme catalyses D-methionine(out) + ATP + H2O = D-methionine(in) + ADP + phosphate + H(+). Part of the ABC transporter complex MetNIQ involved in methionine import. Responsible for energy coupling to the transport system. This chain is Methionine import ATP-binding protein MetN 1, found in Oenococcus oeni (strain ATCC BAA-331 / PSU-1).